Here is a 257-residue protein sequence, read N- to C-terminus: 1-(5-phosphoribosyl)-5-[(5-phosphoribosylamino)methylideneamino] imidazole-4-carboxamide isomerase (257 aa).

Catalysis depends on Asp-8, which acts as the Proton acceptor. Asp-131 acts as the Proton donor in catalysis.

This sequence belongs to the HisA/HisF family.

It localises to the cytoplasm. It catalyses the reaction 1-(5-phospho-beta-D-ribosyl)-5-[(5-phospho-beta-D-ribosylamino)methylideneamino]imidazole-4-carboxamide = 5-[(5-phospho-1-deoxy-D-ribulos-1-ylimino)methylamino]-1-(5-phospho-beta-D-ribosyl)imidazole-4-carboxamide. The protein operates within amino-acid biosynthesis; L-histidine biosynthesis; L-histidine from 5-phospho-alpha-D-ribose 1-diphosphate: step 4/9. The chain is 1-(5-phosphoribosyl)-5-[(5-phosphoribosylamino)methylideneamino] imidazole-4-carboxamide isomerase from Nitrosospira multiformis (strain ATCC 25196 / NCIMB 11849 / C 71).